The primary structure comprises 208 residues: Probable GTP-binding protein EngB (208 aa).

One can recognise an EngB-type G domain in the interval Leu-23–Thr-205. GTP contacts are provided by residues Gly-31 to Ser-38, Gly-57 to Leu-61, Asp-84 to Gly-87, Thr-154 to Asp-157, and Phe-182 to Ala-184. 2 residues coordinate Mg(2+): Ser-38 and Thr-59.

The protein belongs to the TRAFAC class TrmE-Era-EngA-EngB-Septin-like GTPase superfamily. EngB GTPase family. Mg(2+) serves as cofactor.

Its function is as follows. Necessary for normal cell division and for the maintenance of normal septation. The polypeptide is Probable GTP-binding protein EngB (Helicobacter pylori (strain HPAG1)).